We begin with the raw amino-acid sequence, 311 residues long: Formyltransferase/hydrolase complex subunit D (311 aa).

It belongs to the FTR family. Homotetramer. Octaheteromer. Part of the formyltransferase/hydrolase complex fhc; composed of FhcA, FhcB, FhcC and FhcD.

The protein localises to the cytoplasm. It carries out the reaction N-formylmethanofuran + 5,6,7,8-tetrahydromethanopterin + H(+) = N(5)-formyl-5,6,7,8-tetrahydromethanopterin + methanofuran. Its pathway is one-carbon metabolism; formaldehyde degradation; formate from formaldehyde (H(4)MPT route): step 4/5. Involved in the transformation of 5-formyl tetrahydromethanopterin (5-formyl-H(4)MPT) to methanofuran (MFR) and formate via the intermediate formylmethanofuran (formyl-MFR). Catalyzes the transfer of a formyl group from 5-formyl-H(4)MPT to MFR to produce tetrahydromethanopterin (H(4)MPT) and formyl-MFR, which is then hydrolyzed to formate and MFR. In Methylorubrum extorquens (strain ATCC 14718 / DSM 1338 / JCM 2805 / NCIMB 9133 / AM1) (Methylobacterium extorquens), this protein is Formyltransferase/hydrolase complex subunit D.